A 1213-amino-acid polypeptide reads, in one-letter code: Genetic suppressor element 1 (1213 aa).

The segment at 1 to 154 (MKGMSHEPKS…GSRGSSSGRE (154 aa)) is disordered. Residue serine 10 is modified to Phosphoserine. The span at 15–33 (MLSTATRTTATVNPLTPSP) shows a compositional bias: polar residues. Low complexity-rich tracts occupy residues 51–63 (SAQAAPSSSFAAA) and 76–89 (GSSLSSESSPVSSP). Phosphoserine occurs at positions 84 and 95. Residues 103–114 (VPMGPIIVPPGG) show a composition bias toward low complexity. Arginine 305 carries the asymmetric dimethylarginine modification. Residues 319–402 (HSERMSSLSA…REKELLAAKA (84 aa)) adopt a coiled-coil conformation. The interval 326–384 (LSAERLQMDEELRREREREREREREADREREKEREREQREKEREKELEREREKEREREL) is disordered. The segment covering 331–384 (LQMDEELRREREREREREREADREREKEREREQREKEREKELEREREKEREREL) has biased composition (basic and acidic residues). Threonine 433 carries the post-translational modification Phosphothreonine. Lysine 496 is subject to N6-acetyllysine. Disordered regions lie at residues 527-579 (LDLG…QHTV) and 630-719 (SEKA…TARG). 2 stretches are compositionally biased toward basic and acidic residues: residues 537–560 (EAEHRPESTRPGTNRHEQGSREPP) and 630–643 (SEKAEEPRKREATP). Pro residues predominate over residues 648-657 (QPPPPPPPPR). Positions 681–700 (STQTILGQQRPSLSQATSFG) are enriched in polar residues. An N6-acetyllysine modification is found at lysine 739. Phosphoserine occurs at positions 766, 826, 828, and 857. Disordered regions lie at residues 816–858 (RKRR…NNSP), 898–979 (LSAA…EAPG), and 1065–1118 (ELQS…PRRQ). Polar residues predominate over residues 847–858 (TRYSPDEMNNSP). The residue at position 905 (threonine 905) is a Phosphothreonine. Serine 907 carries the post-translational modification Phosphoserine. Polar residues predominate over residues 1065 to 1081 (ELQSSSRVPLPQHNGQQ). The stretch at 1093 to 1197 (QEADQDSEED…ELDHLRKCLA (105 aa)) forms a coiled coil. The segment covering 1095–1112 (ADQDSEEDSEEDSEEEAE) has biased composition (acidic residues). The residue at position 1099 (serine 1099) is a Phosphoserine.

May be a component of a BHC histone deacetylase complex that contains HDAC1, HDAC2, HMG20B/BRAF35, KDM1A, RCOR1/CoREST, PHF21A/BHC80, ZMYM2, ZNF217, ZMYM3, GSE1 and GTF2I.

This is Genetic suppressor element 1 (Gse1) from Mus musculus (Mouse).